Here is a 2336-residue protein sequence, read N- to C-terminus: Voltage-dependent N-type calcium channel subunit alpha-1B (2336 aa).

The tract at residues 1 to 37 is disordered; that stretch reads MVRFGDELGGRYGGTGGGERARGGGAGGAGGPGQGGL. Over 1–90 the chain is Cytoplasmic; sequence MVRFGDELGG…DNVVRKYAKR (90 aa). Over residues 10-37 the composition is skewed to gly residues; sequence GRYGGTGGGERARGGGAGGAGGPGQGGL. Arg-22 is subject to Omega-N-methylarginine. Residues 82-359 form an I repeat; sequence NVVRKYAKRI…LVLGVLSGEF (278 aa). The helical transmembrane segment at 91 to 114 threads the bilayer; that stretch reads ITEWPPFEYMILATIIANCIVLAL. At 115 to 131 the chain is on the extracellular side; the sequence is EQHLPDGDKTPMSERLD. Residues 132-152 traverse the membrane as a helical segment; sequence DTEPYFIGIFCFEAGIKIIAL. Residues 153–163 lie on the Cytoplasmic side of the membrane; the sequence is GFVFHKGSYLR. The helical transmembrane segment at 164 to 182 threads the bilayer; it reads NGWNVMDFVVVLTEILATA. Residues 183–187 are Extracellular-facing; that stretch reads GTDFD. Residues 188–211 traverse the membrane as a helical segment; the sequence is LRTLRAVRVLRPLKLVSGIPSLQV. The Cytoplasmic segment spans residues 212–221; that stretch reads VLKSIMKAMV. Residues 222-244 form a helical membrane-spanning segment; that stretch reads PLLQIGLLLFFAILMFAIIGLEF. The Extracellular portion of the chain corresponds to 245–331; sequence YMGKFHKACF…NTNDAAGNTW (87 aa). Asn-256 is a glycosylation site (N-linked (GlcNAc...) asparagine). Residues 332 to 356 traverse the membrane as a helical segment; sequence NWLYFIPLIIIGSFFMLNLVLGVLS. Topologically, residues 357–483 are cytoplasmic; the sequence is GEFAKERERV…FLIRRMVKAQ (127 aa). The binding to the beta subunit stretch occupies residues 379–396; the sequence is QQIERELNGYLEWIFKAE. Position 411 is a phosphoserine (Ser-411). 452–459 is a binding site for ATP; the sequence is ASLKSGKT. The stretch at 469-713 is one II repeat; it reads EKMFRFLIRR…VFLAIAVDNL (245 aa). Residues 484-502 form a helical membrane-spanning segment; that stretch reads SFYWVVLCVVALNTLCVAM. The Extracellular segment spans residues 503 to 512; it reads VHYNQPQRLT. The chain crosses the membrane as a helical span at residues 513-535; the sequence is TALYFAEFVFLGLFLTEMSLKMY. Over 536–545 the chain is Cytoplasmic; sequence GLGPRSYFRS. Ser-545 serves as a coordination point for a 1,2-diacyl-sn-glycero-3-phospho-(1D-myo-inositol-4,5-bisphosphate). The helical transmembrane segment at 546–567 threads the bilayer; that stretch reads SFNCFDFGVIVGSIFEVVWAAI. The Extracellular segment spans residues 568–574; sequence KPGTSFG. The helical transmembrane segment at 575-587 threads the bilayer; it reads ISVLRALRLLRIF. The a 1,2-diacyl-sn-glycero-3-phospho-(1D-myo-inositol-4,5-bisphosphate) site is built by Arg-585 and Lys-588. At 588–605 the chain is on the cytoplasmic side; the sequence is KVTKYWNSLRNLVVSLLN. Residues 606–631 form a helical membrane-spanning segment; the sequence is SMKSIISLLFLLFLFIVVFALLGMQL. Residues 632 to 683 lie on the Extracellular side of the membrane; that stretch reads FGGQFNFQDETPTTNFDTFPAAILTVFQILTGEDWNAVMYHGIESQGGVSKG. The chain crosses the membrane as a helical span at residues 684–710; it reads MFSSFYFIVLTLFGNYTLLNVFLAIAV. The Cytoplasmic portion of the chain corresponds to 711-1149; that stretch reads DNLANAQELT…FCHYIVTMRY (439 aa). Ser-746, Ser-749, and Ser-784 each carry phosphoserine. Disordered stretches follow at residues 800–1021 and 1051–1076; these read YAST…HQPK and EQPE…STTV. Basic and acidic residues-rich tracts occupy residues 806–827, 870–891, 920–930, 938–948, 970–981, and 996–1021; these read VRPD…RDGL, EQDR…EERA, GSPEEATEREP, HAQDSSKEGKE, GPRETENSEEPT, and PPER…HQPK. The span at 1059–1076 shows a compositional bias: polar residues; sequence QRNVTRMGSQPSDPSTTV. Residue Ser-1067 is modified to Phosphoserine. The stretch at 1135-1421 is one III repeat; it reads NLLRRFCHYI…IFVALIIITF (287 aa). The helical transmembrane segment at 1150–1168 threads the bilayer; sequence FEMVILVVIALSSIALAAE. At 1169–1176 the chain is on the extracellular side; it reads DPVRTDSF. A helical transmembrane segment spans residues 1177 to 1201; sequence RNNALKYMDYIFTGVFTFEMVIKMI. At 1202–1215 the chain is on the cytoplasmic side; that stretch reads DLGLLLHPGAYFRD. The helical transmembrane segment at 1216–1240 threads the bilayer; sequence LWNILDFIVVSGALVAFAFSSFMGG. Topologically, residues 1241–1246 are extracellular; it reads SKGKDI. The helical transmembrane segment at 1247-1267 threads the bilayer; it reads NTIKSLRVLRVLRPLKTIKRL. Residues 1268 to 1285 are Cytoplasmic-facing; the sequence is PKLKAVFDCVVNSLKNVL. A helical membrane pass occupies residues 1286 to 1305; the sequence is NILIVYMLFMFIFAVIAVQL. Topologically, residues 1306 to 1392 are extracellular; that stretch reads FKGKFFYCTD…EQGPSPGFRM (87 aa). Residues 1393-1418 form a helical membrane-spanning segment; sequence ELSIFYVVYFVVFPFFFVNIFVALII. Over 1419–1473 the chain is Cytoplasmic; it reads ITFQEQGDKVMSECSLEKNERACIDFAISAKPLTRYMPQNKQSFQYKTWTFVVSP. An IV repeat occupies 1458–1711; it reads NKQSFQYKTW…LFVAVIMDNF (254 aa). Residues 1474–1492 traverse the membrane as a helical segment; that stretch reads PFEYFIMAMIALNTVVLMM. Residues 1493–1500 lie on the Extracellular side of the membrane; the sequence is KFYDAPYE. Residues 1501 to 1525 form a helical membrane-spanning segment; sequence YELMLKCLNIVFTSMFSLECILKII. Over 1526 to 1535 the chain is Cytoplasmic; sequence AFGVLNYFRD. A helical membrane pass occupies residues 1536–1557; it reads AWNVFDFVTVLGSITDILVTEI. The Extracellular segment spans residues 1558–1563; sequence ANNFIN. N-linked (GlcNAc...) asparagine glycosylation occurs at Asn-1563. A helical membrane pass occupies residues 1564–1582; sequence LSFLRLFRAARLIKLCRQG. Topologically, residues 1583–1601 are cytoplasmic; it reads YTIRILLWTFVQSFKALPY. The helical transmembrane segment at 1602-1621 threads the bilayer; it reads VCLLIAMLFFIYAIIGMQVF. Residues 1622–1683 are Extracellular-facing; that stretch reads GNIALDDGTS…ANASECGSDF (62 aa). N-linked (GlcNAc...) asparagine glycosylation is present at Asn-1675. Residues 1684 to 1707 form a helical membrane-spanning segment; it reads AYFYFVSFIFLCSFLMLNLFVAVI. The Cytoplasmic segment spans residues 1708–2336; it reads MDNFEYLTRD…YHHPDQDHWC (629 aa). Positions 1724-1759 constitute an EF-hand domain; the sequence is HHLDEFIRVWAEYDPAACGRISYNDMFEMLKHMSPP. Positions 1737, 1743, and 1748 each coordinate Ca(2+). The tract at residues 1981–2202 is disordered; that stretch reads TLRGPDGEPQ…TPRPSITYKT (222 aa). The segment covering 2048 to 2062 has biased composition (basic residues); that stretch reads SHHHHHRCHRRRDKK. Ser-2065 is modified (phosphoserine). Positions 2097-2113 are enriched in basic and acidic residues; the sequence is CRRERKQERGRSQERRQ. Over residues 2161–2177 the composition is skewed to polar residues; it reads GSGSVNGSPLMSTSGAS. Phosphoserine is present on residues Ser-2221, Ser-2230, and Ser-2253.

The protein belongs to the calcium channel alpha-1 subunit (TC 1.A.1.11) family. CACNA1B subfamily. In terms of assembly, multisubunit complex consisting of alpha-1, alpha-2, beta and delta subunits in a 1:1:1:1 ratio. The channel activity is directed by the pore-forming and voltage-sensitive alpha-1 subunit. In many cases, this subunit is sufficient to generate voltage-sensitive calcium channel activity. The auxiliary subunits beta and alpha-2/delta linked by a disulfide bridge regulate the channel activity. Interacts with RIMS1. Interacts with FMR1 (via C-terminus); this interaction induces a decrease in the number of presynaptic functional CACNA1B channels at the cell surface. In terms of processing, phosphorylated in vitro by CaM-kinase II, PKA, PKC and CGPK. As to expression, central nervous system.

The protein resides in the membrane. It catalyses the reaction Ca(2+)(in) = Ca(2+)(out). Is specifically blocked by omega-conotoxin GVIA. Is specifically blocked by omega-conotoxin MVIIA (ziconotide). Is insensitive to dihydropyridines (DHP). Voltage-sensitive calcium channels (VSCC) mediate the entry of calcium ions into excitable cells and are also involved in a variety of calcium-dependent processes, including muscle contraction, hormone or neurotransmitter release, gene expression, cell motility, cell division and cell death. This alpha-1B subunit gives rise to N-type calcium currents. N-type calcium channels belong to the 'high-voltage activated' (HVA) group. They are involved in pain signaling. Calcium channels containing alpha-1B subunit may play a role in directed migration of immature neurons. Mediates Ca(2+) release probability at hippocampal neuronal soma and synaptic terminals. The chain is Voltage-dependent N-type calcium channel subunit alpha-1B (Cacna1b) from Rattus norvegicus (Rat).